Here is a 190-residue protein sequence, read N- to C-terminus: Adenine phosphoribosyltransferase (190 aa).

This sequence belongs to the purine/pyrimidine phosphoribosyltransferase family. Homodimer.

It localises to the cytoplasm. The enzyme catalyses AMP + diphosphate = 5-phospho-alpha-D-ribose 1-diphosphate + adenine. It functions in the pathway purine metabolism; AMP biosynthesis via salvage pathway; AMP from adenine: step 1/1. In terms of biological role, catalyzes a salvage reaction resulting in the formation of AMP, that is energically less costly than de novo synthesis. The chain is Adenine phosphoribosyltransferase from Cupriavidus metallidurans (strain ATCC 43123 / DSM 2839 / NBRC 102507 / CH34) (Ralstonia metallidurans).